The sequence spans 353 residues: MSIQVKNIEKHFGAFHALKNISLDFPEGQLVALLGPSGCGKTTLLRIIAGLESADEGKILLEGADATNIHVRERQVGFVFQHYALFRHMSVFDNIAFGLRVRPRSTRPSEAEIKKRVTRLLDLVQLGFLADRYPSQLSGGQRQRIALARALAVEPRVLLLDEPFGALDAKVRKELRRWLRTLHDELHITSIFVTHDQEEALEVADQIIVMNKGNVEQIGSPREVYEKPATPFVFDFLGQANRFDGQYHENKVELGEDQIILPNVSEVPHGKVIAFARPDELHIHAQPQDNTIQATFLREVWIAGKVVAELQDRNGRLIEIALSPDEARLHLFRPNQTVWISVSQLHLFADHVA.

The ABC transporter domain occupies Ile-3–Leu-237. Position 35–42 (Gly-35–Thr-42) interacts with ATP.

This sequence belongs to the ABC transporter superfamily. Sulfate/tungstate importer (TC 3.A.1.6) family. As to quaternary structure, the complex is composed of two ATP-binding proteins (CysA), two transmembrane proteins (CysT and CysW) and a solute-binding protein (CysP).

Its subcellular location is the cell inner membrane. The enzyme catalyses sulfate(out) + ATP + H2O = sulfate(in) + ADP + phosphate + H(+). It catalyses the reaction thiosulfate(out) + ATP + H2O = thiosulfate(in) + ADP + phosphate + H(+). Functionally, part of the ABC transporter complex CysAWTP involved in sulfate/thiosulfate import. Responsible for energy coupling to the transport system. This Acinetobacter baylyi (strain ATCC 33305 / BD413 / ADP1) protein is Sulfate/thiosulfate import ATP-binding protein CysA.